The primary structure comprises 681 residues: MQNPPQHPEAQSPETRDREFFITAAIDYANGTPHIGHVYEKILADAIARYQRLAGRDVTFVMGTDEHGEKISKAAAKGGVTPQELVDDLSERAFQGLWKKLGISYDFFIRTTSAKHKKYVQDVLQRVYDAGDIYFAEYEGLYSVGAERYVTEKELVEGPDGVRRFPGDKDPPELRREANYFFNMQKYQPWLLETLQQNPDLIQPAGYRNEVLEMLKEDIGPLSISRPKARVPWGIELPWDTDHVTYVWFDALLSYLTPLVSQGQDASMSGKAWHVIGKDILKPHAVFWPTMLRAAGLPLYRRLVVHSHILAEDGRKMGKSLGNAIDPEELVAAWPVDAIRYALLREASLGADSPFGEGVLVSRLNSDLANDLGNLLSRTVSMIQKYRGGVIPAATEPTDREREIEAAARALPDEVLRLVDELKINMAIDAAMSFVRDLNRYIAESTPWTLAKSPETQGRLDTVLYTAAEGLRVASVALEAVIPTKAKELREQLGLGRQGYPLQAAWGLTPAGTRVQGGAILFPKPEPKADETKNAEAKPPKPQAKKEKKTVTDTAPAKTTEQKPEAAAPAQNDGLISIDDFAKIDLRIAEVVACEAVEKADKLLKLTVKLGDETRTVVSGIRKWYEPEALVGRKVVLVANLKPAKLRGIESQGMILAAEDDAGNLDLVGTELDLPSGTKVR.

Positions 27-37 (DYANGTPHIGH) match the 'HIGH' region motif. Positions 316–320 (KMGKS) match the 'KMSKS' region motif. K319 lines the ATP pocket. The segment at 522–571 (FPKPEPKADETKNAEAKPPKPQAKKEKKTVTDTAPAKTTEQKPEAAAPAQ) is disordered. Over residues 525 to 539 (PEPKADETKNAEAKP) the composition is skewed to basic and acidic residues. One can recognise a tRNA-binding domain in the interval 580–681 (DFAKIDLRIA…LDLPSGTKVR (102 aa)).

Belongs to the class-I aminoacyl-tRNA synthetase family. MetG type 2B subfamily. Homodimer.

It localises to the cytoplasm. The enzyme catalyses tRNA(Met) + L-methionine + ATP = L-methionyl-tRNA(Met) + AMP + diphosphate. Functionally, is required not only for elongation of protein synthesis but also for the initiation of all mRNA translation through initiator tRNA(fMet) aminoacylation. In Deinococcus radiodurans (strain ATCC 13939 / DSM 20539 / JCM 16871 / CCUG 27074 / LMG 4051 / NBRC 15346 / NCIMB 9279 / VKM B-1422 / R1), this protein is Methionine--tRNA ligase (metG).